The chain runs to 91 residues: UPF0386 protein CC_0226 (91 aa).

Belongs to the UPF0386 family.

The chain is UPF0386 protein CC_0226 from Caulobacter vibrioides (strain ATCC 19089 / CIP 103742 / CB 15) (Caulobacter crescentus).